The sequence spans 90 residues: Small ribosomal subunit protein uS17 (90 aa).

Belongs to the universal ribosomal protein uS17 family. As to quaternary structure, part of the 30S ribosomal subunit.

One of the primary rRNA binding proteins, it binds specifically to the 5'-end of 16S ribosomal RNA. The sequence is that of Small ribosomal subunit protein uS17 from Dehalococcoides mccartyi (strain ATCC BAA-2100 / JCM 16839 / KCTC 5957 / BAV1).